Here is a 1351-residue protein sequence, read N- to C-terminus: Serine-rich adhesin for platelets (1351 aa).

An N-terminal signal peptide occupies residues 1-89 (MSKRQKEFHD…VNMLHDQQAF (89 aa)). Residues 90–230 (AASDAPLTSE…KTSTTSTSTA (141 aa)) are serine-rich repeat region 1, SRR1. A compositionally biased stretch (polar residues) spans 100–111 (LNTQSETVGNQN). 2 disordered regions span residues 100 to 228 (LNTQ…TSTS) and 751 to 1323 (NSMS…GLLG). 2 stretches are compositionally biased toward low complexity: residues 112–133 (STTI…NSSS) and 149–228 (NVTS…TSTS). The non-repeat region (NRR) stretch occupies residues 231–751 (PIKLRTFSRL…TTFKYEVTRN (521 aa)). A compositionally biased stretch (low complexity) spans 752–1294 (SMSDSVSTSG…SQSTLSATSE (543 aa)). Residues 752 to 1312 (SMSDSVSTSG…AQSEKRLPDT (561 aa)) form a serine-rich repeat region 1, SRR1 region. Residues 1309 to 1313 (LPDTG) carry the LPXTG sorting signal motif. At T1312 the chain carries Pentaglycyl murein peptidoglycan amidated threonine. Positions 1313–1351 (GDSIKQNGLLGGVMTLLVGLGLMKRKKKKDENDQDDSQA) are cleaved as a propeptide — removed by sortase.

The protein belongs to the serine-rich repeat protein (SRRP) family. Proteolytically cleaved by a metalloprotease. In terms of processing, glycosylated. It is probable that most of the Ser residues in SSR1 and SSR2 are O-GlcNAcylated. Sequential glycosylation by sugar transferases are able to generate complex sugar polymorphisms.

It localises to the secreted. The protein localises to the cell wall. Functionally, mediates binding to human platelets, possibly through a receptor-ligand interaction. Probably associated with virulence in endovascular infection. This chain is Serine-rich adhesin for platelets (sasA), found in Staphylococcus aureus (strain MRSA252).